The primary structure comprises 419 residues: L-rhamnose isomerase (419 aa).

Mn(2+) contacts are provided by histidine 262, aspartate 294, and aspartate 296.

The protein belongs to the rhamnose isomerase family. Homotetramer. Mn(2+) is required as a cofactor.

The protein resides in the cytoplasm. It catalyses the reaction L-rhamnopyranose = L-rhamnulose. It participates in carbohydrate degradation; L-rhamnose degradation; glycerone phosphate from L-rhamnose: step 1/3. Catalyzes the interconversion of L-rhamnose and L-rhamnulose. In Escherichia coli O139:H28 (strain E24377A / ETEC), this protein is L-rhamnose isomerase.